Here is a 267-residue protein sequence, read N- to C-terminus: Phosphate import ATP-binding protein PstB (267 aa).

Residues 21–262 form the ABC transporter domain; sequence IAIRNLEFYY…PSKQQTEDYI (242 aa). 53–60 serves as a coordination point for ATP; the sequence is GPSGCGKS.

Belongs to the ABC transporter superfamily. Phosphate importer (TC 3.A.1.7) family. The complex is composed of two ATP-binding proteins (PstB), two transmembrane proteins (PstC and PstA) and a solute-binding protein (PstS).

It is found in the cell inner membrane. It catalyses the reaction phosphate(out) + ATP + H2O = ADP + 2 phosphate(in) + H(+). Its function is as follows. Part of the ABC transporter complex PstSACB involved in phosphate import. Responsible for energy coupling to the transport system. This chain is Phosphate import ATP-binding protein PstB, found in Xylella fastidiosa (strain 9a5c).